The sequence spans 372 residues: Cytochrome b (372 aa).

A run of 4 helical transmembrane segments spans residues 25–45, 69–90, 105–125, and 170–190; these read FGSM…FLAI, WIMQ…YIHI, WVSG…GYVL, and FFAL…IHVM. 2 residues coordinate heme b: histidine 75 and histidine 89. Positions 174 and 188 each coordinate heme b. An a ubiquinone-binding site is contributed by histidine 193. 4 consecutive transmembrane segments (helical) span residues 218–238, 280–300, 312–332, and 339–358; these read YKDT…TSFF, LGGT…PFTH, MAQV…WAAT, and FTTI…IINP.

Belongs to the cytochrome b family. The cytochrome bc1 complex contains 3 respiratory subunits (MT-CYB, CYC1 and UQCRFS1), 2 core proteins (UQCRC1 and UQCRC2) and probably 6 low-molecular weight proteins. Heme b serves as cofactor.

It localises to the mitochondrion inner membrane. Its function is as follows. Component of the ubiquinol-cytochrome c reductase complex (complex III or cytochrome b-c1 complex) that is part of the mitochondrial respiratory chain. The b-c1 complex mediates electron transfer from ubiquinol to cytochrome c. Contributes to the generation of a proton gradient across the mitochondrial membrane that is then used for ATP synthesis. The chain is Cytochrome b (MT-CYB) from Heterodon simus (Southern hognose snake).